The following is a 168-amino-acid chain: uncharacterized protein (168 aa).

The HTH asnC-type domain maps to 19-80; sequence LDKLDRHILN…VVSPKAVGRT (62 aa). Positions 38 to 57 form a DNA-binding region, H-T-H motif; sequence LKELSEKVNSSVATCQRRVQ.

This is an uncharacterized protein from Haemophilus influenzae (strain ATCC 51907 / DSM 11121 / KW20 / Rd).